Reading from the N-terminus, the 183-residue chain is Dual-action ribosomal maturation protein DarP (183 aa).

Residues M1 to V27 form a disordered region. Positions V9 to E18 are enriched in acidic residues.

This sequence belongs to the DarP family.

It is found in the cytoplasm. Functionally, member of a network of 50S ribosomal subunit biogenesis factors which assembles along the 30S-50S interface, preventing incorrect 23S rRNA structures from forming. Promotes peptidyl transferase center (PTC) maturation. The sequence is that of Dual-action ribosomal maturation protein DarP from Bordetella pertussis (strain Tohama I / ATCC BAA-589 / NCTC 13251).